A 211-amino-acid chain; its full sequence is Cell division protein SepF (211 aa).

The segment covering 15–26 (DTDEVNEVEEEV) has biased composition (acidic residues). Positions 15–111 (DTDEVNEVEE…ETYQAQTTVQ (97 aa)) are disordered. 3 stretches are compositionally biased toward polar residues: residues 44-57 (IPSQQTSRQSQNPA), 64-81 (ARSQQTESDSLPTYPNRQ), and 91-111 (RESVTASTARRETYQAQTTVQ).

This sequence belongs to the SepF family. In terms of assembly, homodimer. Interacts with FtsZ.

It localises to the cytoplasm. Its function is as follows. Cell division protein that is part of the divisome complex and is recruited early to the Z-ring. Probably stimulates Z-ring formation, perhaps through the cross-linking of FtsZ protofilaments. Its function overlaps with FtsA. The sequence is that of Cell division protein SepF from Streptococcus uberis (strain ATCC BAA-854 / 0140J).